Here is a 500-residue protein sequence, read N- to C-terminus: Galactose/methyl galactoside import ATP-binding protein MglA (500 aa).

ABC transporter domains lie at 8-243 (LEME…VGRD) and 257-500 (EMIL…AKYL). 40–47 (GENGAGKS) provides a ligand contact to ATP.

Belongs to the ABC transporter superfamily. Galactose/methyl galactoside importer (TC 3.A.1.2.3) family. In terms of assembly, the complex is composed of one ATP-binding protein (MglA), two transmembrane proteins (MglC) and a solute-binding protein (MglB).

It localises to the cell inner membrane. The catalysed reaction is D-galactose(out) + ATP + H2O = D-galactose(in) + ADP + phosphate + H(+). It carries out the reaction methyl beta-D-galactoside(out) + ATP + H2O = methyl beta-D-galactoside(in) + ADP + phosphate + H(+). Functionally, part of the ABC transporter complex MglABC involved in galactose/methyl galactoside import. Responsible for energy coupling to the transport system. In Fusobacterium nucleatum subsp. nucleatum (strain ATCC 25586 / DSM 15643 / BCRC 10681 / CIP 101130 / JCM 8532 / KCTC 2640 / LMG 13131 / VPI 4355), this protein is Galactose/methyl galactoside import ATP-binding protein MglA.